The chain runs to 131 residues: MMNFRQRMGWIGVSLYLFVSAAAFYYVFEINETYNRLALEHVQLKPHEPHRGTTWTHSLKIRLLSLPFWLWAALFLIPYFQVFLFLYSCTRADPKTVGYCIIPICLAIICNRHQSFVKASNRISKLQLIDT.

The next 2 helical transmembrane spans lie at 8–28 and 66–86; these read MGWI…YYVF and LPFW…FLFL.

The protein belongs to the LYSET family.

Its subcellular location is the golgi apparatus membrane. Functionally, required for mannose-6-phosphate-dependent trafficking of lysosomal enzymes. LYSET bridges GlcNAc-1-phosphate transferase (GNPTAB), to the membrane-bound transcription factor site-1 protease (MBTPS1), thus allowing proteolytic activation of the GNPTAB. GNPTAB is involved in the regulation of M6P-dependent Golgi-to-lysosome trafficking of lysosomal enzymes. LYSET is thus an essential factor for maturation and delivery of lysosomal hydrolases. The polypeptide is Lysosomal enzyme trafficking factor (lyset-b) (Xenopus laevis (African clawed frog)).